The sequence spans 198 residues: Penicillin-binding protein activator LpoB (198 aa).

The first 19 residues, 1–19, serve as a signal peptide directing secretion; it reads MIRSVNRTGALMMALILSG. The N-palmitoyl cysteine moiety is linked to residue Cys-20. Residue Cys-20 is the site of S-diacylglycerol cysteine attachment. A compositionally biased stretch (low complexity) spans 26–37; it reads QPAPVEPTQPVE. Residues 26-59 form a disordered region; the sequence is QPAPVEPTQPVEPVQPVPQPEQPIPQPQPVPQPP. A compositionally biased stretch (pro residues) spans 38–59; the sequence is PVQPVPQPEQPIPQPQPVPQPP.

This sequence belongs to the LpoB family. Interacts with PBP1b.

The protein resides in the cell outer membrane. Its function is as follows. Regulator of peptidoglycan synthesis that is essential for the function of penicillin-binding protein 1B (PBP1b). In Pantoea ananatis (strain LMG 20103), this protein is Penicillin-binding protein activator LpoB.